A 263-amino-acid chain; its full sequence is MGQKIHPTGFRLAVTRNWTSRWFADDKAFGTMLAEDIRVREYLKKKLKSASVGRVIIERPAKNARITVYSARPGVVIGKRGEDIENLKADLQRLMGVPVHVNIEEIRKPETDAQLIADSISQQLEKRIMFRRAMKRAMQNAMRLGAQGIKIMSSGRLNGIEIARTEWYREGRVPLHTLKANIDYGTSEAHTTYGVIGIKVWVYKGDMLANGELPPEAATPREEERRPRRAPRGDRPDGARTGRPGGRGRGPRKADAAPAPEGE.

In terms of domain architecture, KH type-2 spans 39–107; sequence VREYLKKKLK…PVHVNIEEIR (69 aa). Residues 211 to 263 are disordered; that stretch reads GELPPEAATPREEERRPRRAPRGDRPDGARTGRPGGRGRGPRKADAAPAPEGE. The span at 219–240 shows a compositional bias: basic and acidic residues; the sequence is TPREEERRPRRAPRGDRPDGAR.

Belongs to the universal ribosomal protein uS3 family. As to quaternary structure, part of the 30S ribosomal subunit. Forms a tight complex with proteins S10 and S14.

In terms of biological role, binds the lower part of the 30S subunit head. Binds mRNA in the 70S ribosome, positioning it for translation. The protein is Small ribosomal subunit protein uS3 of Bordetella pertussis (strain Tohama I / ATCC BAA-589 / NCTC 13251).